Here is a 200-residue protein sequence, read N- to C-terminus: Imidazoleglycerol-phosphate dehydratase (200 aa).

This sequence belongs to the imidazoleglycerol-phosphate dehydratase family.

The protein resides in the cytoplasm. It carries out the reaction D-erythro-1-(imidazol-4-yl)glycerol 3-phosphate = 3-(imidazol-4-yl)-2-oxopropyl phosphate + H2O. The protein operates within amino-acid biosynthesis; L-histidine biosynthesis; L-histidine from 5-phospho-alpha-D-ribose 1-diphosphate: step 6/9. The polypeptide is Imidazoleglycerol-phosphate dehydratase (Chlorobium limicola (strain DSM 245 / NBRC 103803 / 6330)).